A 244-amino-acid chain; its full sequence is Glutathione S-transferase theta-2 (244 aa).

The GST N-terminal domain maps to 2–82 (GLELYLDLLS…YLSSKYQVAD (81 aa)). Glutathione-binding positions include 40–41 (HL), 53–54 (KV), 66–67 (ES), and 104–107 (DNIR). The region spanning 88–230 (DLQARAQVHE…AKKTLPVPPP (143 aa)) is the GST C-terminal domain.

It belongs to the GST superfamily. Theta family. As to quaternary structure, homodimer. Highest values found in liver followed by testis, adrenal gland, kidney, lung, brain and skeletal muscle. In liver, highest expression found in central vein limiting plate hepatocytes. In lung, expressed mainly in club cells of the bronchiolar epithelium and, at low levels, in type II alveolar cells.

It is found in the cytoplasm. It localises to the cytosol. The protein localises to the nucleus. It carries out the reaction RX + glutathione = an S-substituted glutathione + a halide anion + H(+). Functionally, catalyzes the inactivation of reactive sulfate esters in carcinogenic arylmethanols. Highest activity towards ethacrynic acid and cumene hydroperoxide. This Rattus norvegicus (Rat) protein is Glutathione S-transferase theta-2 (Gstt2).